The chain runs to 314 residues: Putative thiamine biosynthesis protein HI_0357 (314 aa).

The protein belongs to the NMT1/THI5 family.

Its function is as follows. Probably involved in thiamine biosynthesis. The sequence is that of Putative thiamine biosynthesis protein HI_0357 from Haemophilus influenzae (strain ATCC 51907 / DSM 11121 / KW20 / Rd).